The primary structure comprises 25 residues: Caerin-1.2 (25 aa).

Leucine 25 bears the Leucine amide mark.

In terms of tissue distribution, expressed by the skin parotoid and/or rostral glands.

The protein localises to the secreted. Its function is as follows. Antibacterial peptide, that adopts an alpha helical conformation which can disrupt bacterial membranes. Each caerin displays a different antimicrobial specificity. This is Caerin-1.2 from Ranoidea caerulea (Green tree frog).